We begin with the raw amino-acid sequence, 98 residues long: NADH-ubiquinone oxidoreductase chain 4L (98 aa).

A run of 3 helical transmembrane segments spans residues 1 to 21 (MSMVYINIFLAFTMSLMGLLM), 29 to 49 (SLLCLEGMMLSLFIMMAVAIL), and 61 to 81 (IILLVFAACEAALGLSLLVMV).

It belongs to the complex I subunit 4L family. Core subunit of respiratory chain NADH dehydrogenase (Complex I) which is composed of 45 different subunits.

The protein localises to the mitochondrion inner membrane. It catalyses the reaction a ubiquinone + NADH + 5 H(+)(in) = a ubiquinol + NAD(+) + 4 H(+)(out). Its function is as follows. Core subunit of the mitochondrial membrane respiratory chain NADH dehydrogenase (Complex I) which catalyzes electron transfer from NADH through the respiratory chain, using ubiquinone as an electron acceptor. Part of the enzyme membrane arm which is embedded in the lipid bilayer and involved in proton translocation. The polypeptide is NADH-ubiquinone oxidoreductase chain 4L (MT-ND4L) (Puma concolor (Mountain lion)).